Consider the following 2890-residue polypeptide: Bifunctional DNA-directed RNA polymerase subunit beta-beta' (2890 aa).

A DNA-directed RNA polymerase subunit beta region spans residues 1–1377 (MSKKIPLKNR…DINIFGDEMD (1377 aa)). Positions 1384-2890 (PIVIKEDDRP…LRTIEDSPKI (1507 aa)) are DNA-directed RNA polymerase subunit beta'. Positions 1449, 1451, 1465, and 1468 each coordinate Zn(2+). Mg(2+)-binding residues include aspartate 1849, aspartate 1851, and aspartate 1853. Zn(2+)-binding residues include cysteine 2179, cysteine 2253, cysteine 2260, and cysteine 2263.

It in the N-terminal section; belongs to the RNA polymerase beta chain family. The protein in the C-terminal section; belongs to the RNA polymerase beta' chain family. As to quaternary structure, the RNAP catalytic core consists of 2 alpha, 1 beta/beta' and 1 omega subunit. When a sigma factor is associated with the core the holoenzyme is formed, which can initiate transcription. Mg(2+) is required as a cofactor. Zn(2+) serves as cofactor.

It catalyses the reaction RNA(n) + a ribonucleoside 5'-triphosphate = RNA(n+1) + diphosphate. Functionally, DNA-dependent RNA polymerase catalyzes the transcription of DNA into RNA using the four ribonucleoside triphosphates as substrates. The polypeptide is Bifunctional DNA-directed RNA polymerase subunit beta-beta' (rpoBC) (Helicobacter acinonychis (strain Sheeba)).